We begin with the raw amino-acid sequence, 644 residues long: Forkhead box protein O (644 aa).

The disordered stretch occupies residues 39-75 (FEPQTRARSNTWPCPRPENFVEPPDELDSTKASNQQL). Residue threonine 49 is modified to Phosphothreonine; by PKB/AKT1. Serine 80 is modified (phosphoserine). Residues 100 to 206 (WGNLSYADLI…ETSRYEKRRG (107 aa)) constitute a DNA-binding region (fork-head). 5 disordered regions span residues 187 to 210 (KSVR…RAKK), 222 to 276 (GLND…SPIR), 329 to 386 (QQQQ…QTLQ), 412 to 435 (SPNS…DSLN), and 578 to 612 (QQHL…NSSL). Residue serine 195 is modified to Phosphoserine; by PKB/AKT1. 2 stretches are compositionally biased toward polar residues: residues 226–235 (ATPSPSSSVS) and 261–270 (RASSNASSCG). The residue at position 264 (serine 264) is a Phosphoserine; by PKB/AKT1. 3 positions are modified to phosphoserine: serine 267, serine 268, and serine 273. Over residues 329–340 (QQQQQQQQQQQQ) the composition is skewed to low complexity. Positions 350–359 (SQPPPPPYQP) are enriched in pro residues. Low complexity predominate over residues 360-374 (PQLQQQQQQQPSYSL). Polar residues predominate over residues 412 to 421 (SPNSVTTTMS).

In terms of assembly, interacts with melt.

The protein resides in the cytoplasm. It is found in the nucleus. Functionally, transcription factor involved in the regulation of the insulin signaling pathway. Consistently activates both the downstream target Thor\d4EBP and the feedback control target InR. Involved in negative regulation of the cell cycle, modulating cell growth and proliferation. In response to cellular stresses, such as nutrient deprivation or increased levels of reactive oxygen species, foxo is activated and inhibits growth through the action of target genes such as Thor. Foxo activated in the adult fat body can regulate lifespan in adults; an insulin peptide itself may function as one secondary messenger of insulin-regulated aging. Also regulates Lip4, homolog of human acid lipases, thereby acting as a key modulator of lipid metabolism by insulin signaling and integrates insulin responses to glucose and lipid homeostasis. The chain is Forkhead box protein O from Drosophila pseudoobscura pseudoobscura (Fruit fly).